Here is a 466-residue protein sequence, read N- to C-terminus: Ribulose bisphosphate carboxylase large chain (466 aa).

Lysine 5 carries the N6,N6,N6-trimethyllysine modification. Substrate contacts are provided by asparagine 114 and threonine 164. Lysine 166 (proton acceptor) is an active-site residue. A substrate-binding site is contributed by lysine 168. Mg(2+)-binding residues include lysine 192, aspartate 194, and glutamate 195. Lysine 192 carries the post-translational modification N6-carboxylysine. The active-site Proton acceptor is histidine 285. Arginine 286, histidine 318, and serine 370 together coordinate substrate.

The protein belongs to the RuBisCO large chain family. Type I subfamily. Heterohexadecamer of 8 large chains and 8 small chains; disulfide-linked. The disulfide link is formed within the large subunit homodimers. Mg(2+) serves as cofactor. Post-translationally, the disulfide bond which can form in the large chain dimeric partners within the hexadecamer appears to be associated with oxidative stress and protein turnover.

The protein localises to the plastid. It is found in the chloroplast. The catalysed reaction is 2 (2R)-3-phosphoglycerate + 2 H(+) = D-ribulose 1,5-bisphosphate + CO2 + H2O. It catalyses the reaction D-ribulose 1,5-bisphosphate + O2 = 2-phosphoglycolate + (2R)-3-phosphoglycerate + 2 H(+). Functionally, ruBisCO catalyzes two reactions: the carboxylation of D-ribulose 1,5-bisphosphate, the primary event in carbon dioxide fixation, as well as the oxidative fragmentation of the pentose substrate in the photorespiration process. Both reactions occur simultaneously and in competition at the same active site. In Drosera filiformis (Thread-leaved sundew), this protein is Ribulose bisphosphate carboxylase large chain.